Consider the following 475-residue polypeptide: Ribulose bisphosphate carboxylase large chain (475 aa).

A propeptide spanning residues 1-2 is cleaved from the precursor; that stretch reads MS. Residue Pro3 is modified to N-acetylproline. Lys14 carries the post-translational modification N6,N6,N6-trimethyllysine. Substrate is bound by residues Asn123 and Thr173. The active-site Proton acceptor is the Lys175. Residue Lys177 participates in substrate binding. 3 residues coordinate Mg(2+): Lys201, Asp203, and Glu204. Lys201 bears the N6-carboxylysine mark. The active-site Proton acceptor is His294. Residues Arg295, His327, and Ser379 each contribute to the substrate site.

Belongs to the RuBisCO large chain family. Type I subfamily. As to quaternary structure, heterohexadecamer of 8 large chains and 8 small chains; disulfide-linked. The disulfide link is formed within the large subunit homodimers. Mg(2+) is required as a cofactor. Post-translationally, the disulfide bond which can form in the large chain dimeric partners within the hexadecamer appears to be associated with oxidative stress and protein turnover.

It is found in the plastid. Its subcellular location is the chloroplast. The enzyme catalyses 2 (2R)-3-phosphoglycerate + 2 H(+) = D-ribulose 1,5-bisphosphate + CO2 + H2O. The catalysed reaction is D-ribulose 1,5-bisphosphate + O2 = 2-phosphoglycolate + (2R)-3-phosphoglycerate + 2 H(+). Its function is as follows. RuBisCO catalyzes two reactions: the carboxylation of D-ribulose 1,5-bisphosphate, the primary event in carbon dioxide fixation, as well as the oxidative fragmentation of the pentose substrate in the photorespiration process. Both reactions occur simultaneously and in competition at the same active site. This chain is Ribulose bisphosphate carboxylase large chain, found in Pinus balfouriana (Foxtail pine).